The following is a 158-amino-acid chain: NAD(P)H-quinone oxidoreductase subunit J, chloroplastic (158 aa).

It belongs to the complex I 30 kDa subunit family. NDH is composed of at least 16 different subunits, 5 of which are encoded in the nucleus.

The protein localises to the plastid. Its subcellular location is the chloroplast thylakoid membrane. The enzyme catalyses a plastoquinone + NADH + (n+1) H(+)(in) = a plastoquinol + NAD(+) + n H(+)(out). It catalyses the reaction a plastoquinone + NADPH + (n+1) H(+)(in) = a plastoquinol + NADP(+) + n H(+)(out). In terms of biological role, NDH shuttles electrons from NAD(P)H:plastoquinone, via FMN and iron-sulfur (Fe-S) centers, to quinones in the photosynthetic chain and possibly in a chloroplast respiratory chain. The immediate electron acceptor for the enzyme in this species is believed to be plastoquinone. Couples the redox reaction to proton translocation, and thus conserves the redox energy in a proton gradient. This chain is NAD(P)H-quinone oxidoreductase subunit J, chloroplastic, found in Buxus microphylla (Littleleaf boxwood).